The sequence spans 472 residues: Hepatocyte nuclear factor 3-alpha (472 aa).

The fork-head DNA-binding region spans 169 to 260 (AKPPYSYISL…GNMFENGCYL (92 aa)). Positions 269-392 (EKQPGAGGGG…ESQLHLKGDP (124 aa)) are disordered. A compositionally biased stretch (gly residues) spans 273 to 289 (GAGGGGGSGSGGSGAKG). 2 positions are modified to phosphoserine: S307 and S331. Low complexity-rich tracts occupy residues 322 to 332 (GAPAPGPAASP) and 351 to 366 (TPAS…GPGA).

In terms of assembly, binds DNA as a monomer. Interacts with FOXA2. Interacts with NKX2-1. Interacts with HDAC7. Interacts with the histone H3-H4 heterodimer. Associates with nucleosomes containing histone H2A. Interacts with AR. Interacts with NR0B2. Highly expressed in prostate and ESR1-positive breast tumors. Overexpressed in esophageal and lung adenocarcinomas.

The protein localises to the nucleus. Functionally, transcription factor that is involved in embryonic development, establishment of tissue-specific gene expression and regulation of gene expression in differentiated tissues. Is thought to act as a 'pioneer' factor opening the compacted chromatin for other proteins through interactions with nucleosomal core histones and thereby replacing linker histones at target enhancer and/or promoter sites. Binds DNA with the consensus sequence 5'-[AC]A[AT]T[AG]TT[GT][AG][CT]T[CT]-3'. Proposed to play a role in translating the epigenetic signatures into cell type-specific enhancer-driven transcriptional programs. Its differential recruitment to chromatin is dependent on distribution of histone H3 methylated at 'Lys-5' (H3K4me2) in estrogen-regulated genes. Involved in the development of multiple endoderm-derived organ systems such as liver, pancreas, lung and prostate; FOXA1 and FOXA2 seem to have at least in part redundant roles. Modulates the transcriptional activity of nuclear hormone receptors. Is involved in ESR1-mediated transcription; required for ESR1 binding to the NKX2-1 promoter in breast cancer cells; binds to the RPRM promoter and is required for the estrogen-induced repression of RPRM. Involved in regulation of apoptosis by inhibiting the expression of BCL2. Involved in cell cycle regulation by activating expression of CDKN1B, alone or in conjunction with BRCA1. Originally described as a transcription activator for a number of liver genes such as AFP, albumin, tyrosine aminotransferase, PEPCK, etc. Interacts with the cis-acting regulatory regions of these genes. Involved in glucose homeostasis. The polypeptide is Hepatocyte nuclear factor 3-alpha (FOXA1) (Homo sapiens (Human)).